We begin with the raw amino-acid sequence, 272 residues long: Carbonic anhydrase (272 aa).

C39, H98, and C101 together coordinate Zn(2+).

This sequence belongs to the beta-class carbonic anhydrase family. As to quaternary structure, a hexamer formed by a trimer of dimers. Purified from carboxysomes with the both RuBisCO subunits and the full-length form of CcmM, probably interacts with the N-terminus of CcmM. It depends on Zn(2+) as a cofactor.

The protein localises to the carboxysome. It catalyses the reaction hydrogencarbonate + H(+) = CO2 + H2O. Its function is as follows. Reversible hydration of carbon dioxide. Essential to photosynthetic carbon dioxide fixation, supplies CO(2) to RuBisCO (ribulose bisphosphate carboxylase, rbcL-rbcS) in the carboxysome. Loss of activity results in limitation of CO(2) availability to RuBisCO located in the cytoplasm. This is Carbonic anhydrase from Synechococcus elongatus (strain ATCC 33912 / PCC 7942 / FACHB-805) (Anacystis nidulans R2).